The following is a 90-amino-acid chain: Putative cytochrome c oxidase subunit 5b-like (90 aa).

Residues C43, C67, and C70 each contribute to the Zn(2+) site.

This sequence belongs to the cytochrome c oxidase subunit 5B (TC 3.D.4.11) family.

This chain is Putative cytochrome c oxidase subunit 5b-like, found in Arabidopsis thaliana (Mouse-ear cress).